The chain runs to 344 residues: Putative NAD(P)H nitroreductase MT3217 (344 aa).

Residues 40–44 (QPWRW) and Arg326 each bind FMN.

The protein belongs to the nitroreductase family. In terms of assembly, interacts with human TLR2. FMN serves as cofactor.

Functionally, stimulates pro-inflammatory cytokine expression via TLR2 signaling pathway. Activation of TLR2 results in the phosphorylation and activation of NF-kappa-B. Also induces TLR2 expression. May influence the innate immune responses to facilitate the survival of M.tuberculosis in the granulomatous microenvironment. This is Putative NAD(P)H nitroreductase MT3217 from Mycobacterium tuberculosis (strain CDC 1551 / Oshkosh).